A 26-amino-acid polypeptide reads, in one-letter code: Potassium channel toxin alpha-KTx6 OcyKTx1 (26 aa).

Cysteine 3 and cysteine 24 are disulfide-bonded.

Belongs to the short scorpion toxin superfamily. Potassium channel inhibitor family. Alpha-KTx 06 subfamily. In terms of tissue distribution, expressed by the venom gland.

It localises to the secreted. In terms of biological role, blocks voltage-gated potassium channels. The polypeptide is Potassium channel toxin alpha-KTx6 OcyKTx1 (Opisthacanthus cayaporum (South American scorpion)).